A 445-amino-acid chain; its full sequence is Xylose isomerase (445 aa).

Residues His99 and Asp102 contribute to the active site. Mg(2+) contacts are provided by Glu230, Glu266, His269, Asp294, Asp305, Asp307, and Asp337.

This sequence belongs to the xylose isomerase family. Homotetramer. The cofactor is Mg(2+).

It is found in the cytoplasm. It catalyses the reaction alpha-D-xylose = alpha-D-xylulofuranose. This is Xylose isomerase from Geobacillus thermodenitrificans (strain NG80-2).